The sequence spans 241 residues: Glucosamine-6-phosphate deaminase (241 aa).

The active-site Proton acceptor; for enolization step is the Asp-67. The active-site For ring-opening step is Asn-136. Residue His-138 is the Proton acceptor; for ring-opening step of the active site. Glu-143 functions as the For ring-opening step in the catalytic mechanism.

Belongs to the glucosamine/galactosamine-6-phosphate isomerase family. NagB subfamily.

It catalyses the reaction alpha-D-glucosamine 6-phosphate + H2O = beta-D-fructose 6-phosphate + NH4(+). Its pathway is amino-sugar metabolism; N-acetylneuraminate degradation; D-fructose 6-phosphate from N-acetylneuraminate: step 5/5. Catalyzes the reversible isomerization-deamination of glucosamine 6-phosphate (GlcN6P) to form fructose 6-phosphate (Fru6P) and ammonium ion. The chain is Glucosamine-6-phosphate deaminase from Bacillus velezensis (strain DSM 23117 / BGSC 10A6 / LMG 26770 / FZB42) (Bacillus amyloliquefaciens subsp. plantarum).